Reading from the N-terminus, the 226-residue chain is UPF0758 protein SPT_1135 (226 aa).

An MPN domain is found at 103-225 (SILSSQKLAK…YFSYREKTDL (123 aa)). The Zn(2+) site is built by H174, H176, and D187. A JAMM motif motif is present at residues 174–187 (HNHPSGAVAPSQND).

Belongs to the UPF0758 family.

The protein is UPF0758 protein SPT_1135 of Streptococcus pneumoniae (strain Taiwan19F-14).